The chain runs to 167 residues: uncharacterized protein (167 aa).

The next 4 membrane-spanning stretches (helical) occupy residues leucine 13–isoleucine 33, valine 37–tyrosine 57, tryptophan 61–glutamate 81, and leucine 103–serine 123.

It is found in the cell membrane. This is an uncharacterized protein from Haemophilus influenzae (strain ATCC 51907 / DSM 11121 / KW20 / Rd).